The sequence spans 581 residues: MNIENYLSETLAKVFQKLGYAESFAKVVTSTREDVGHFQCNGAMPLAKFAKKPPLAIAEEIVEHIDAEDIFAKLEVAKPGFINITLAPKFLADTTNRFLNSNKFGVQNNLPNRKVVLDFGGPNVAKPMHVGHIRSALLGDALQRIHRFCGDTVISDVHLGDWGTQMGMLIEEIKLQSPQLVYFDENYTGEYPTESPITVQELAEIYPRASKRCKSDINEMEKARLATFELQQGRRGYVALWQHFVRISIDAVKKDFDSLDVHFDLWLGESDANKFIDEMISYFQANNFIYEDEGAWVIDTNKDGVPPLIVIKKDGGVMYGTTDLATLWQRSKDLDPDEIIYVVDKRQSLHFKQVFSVAERTKVVSEKCKLKHVAFGTVNGKDGRPFKTREGGVMHLADLISQAKEYAKNRMPDENDDSIIDQIAMATIKFGDLINNYANDYFFDLEKFAQHEGKTGPYLLYTVVRAKSILRKIFGDNYDIKSLAKDYKVVNAHNEYEEKLQLQLIQFPIAVQRAYENSQPHHICEYAYSLANSFNKFYVNCPINNLDDESLKKARIALCMATVKAMTIASDLIGISIPERM.

A 'HIGH' region motif is present at residues 122-132 (PNVAKPMHVGH).

It belongs to the class-I aminoacyl-tRNA synthetase family. As to quaternary structure, monomer.

It localises to the cytoplasm. The enzyme catalyses tRNA(Arg) + L-arginine + ATP = L-arginyl-tRNA(Arg) + AMP + diphosphate. This chain is Arginine--tRNA ligase, found in Francisella tularensis subsp. holarctica (strain FTNF002-00 / FTA).